A 186-amino-acid polypeptide reads, in one-letter code: Intraflagellar transport protein 27 homolog (186 aa).

Residues 12-19, 64-68, and 123-126 each bind GTP; these read GDPAVGKT, DSAGK, and TKTD.

This sequence belongs to the small GTPase superfamily. Rab family. As to quaternary structure, component of the IFT complex B, at least composed of IFT20, IFT22, IFT25, IFT27, IFT46, IFT52, TRAF3IP1/IFT54, IFT57, IFT74, IFT80, IFT81, and IFT88. Interacts with IFT25. Interacts with IFT70B. Interacts with RABL2/RABL2A; binding is equal in the presence of GTP or GDP. Interacts with IFT88. Interacts with ARL6; recognizes and binds with the GTP-free form of ARL6. As to expression, expressed predominantly in the testis (at protein level). Co-localizes with RABL2/RABL2A in the midpiece of elongated spermatids within the testis (at protein level).

It is found in the cell projection. The protein resides in the cilium. The protein localises to the cytoplasm. Its subcellular location is the flagellum. In terms of biological role, small GTPase-like component of the intraflagellar transport (IFT) complex B that promotes the exit of the BBSome complex from cilia via its interaction with ARL6. Not involved in entry of the BBSome complex into cilium. Prevents aggregation of GTP-free ARL6. Required for hedgehog signaling. Forms a subcomplex within the IFT complex B with IFT25. Its role in intraflagellar transport is mainly seen in tissues rich in ciliated cells such as kidney and testis. Essential for male fertility, spermiogenesis and sperm flagella formation. Plays a role in the early development of the kidney. May be involved in the regulation of ureteric bud initiation. This is Intraflagellar transport protein 27 homolog (Ift27) from Mus musculus (Mouse).